Consider the following 364-residue polypeptide: MEPLLSLKSVSKSYDDLNILDDIDIDIESGYFYTLLGPSGCGKTTILKLIAGFEYPDSGEVIYQNKPIGNLPPNKRKVNTVFQDYALFPHLNVYDNIAFGLKLKKLSKTEIDQKVTEALKLVKLSGYEKRNINEMSGGQKQRVAIARAIVNEPEILLLDESLSALDLKLRTEMQYELRELQSRLGITFIFVTHDQEEALALSDFLFVLKDGKIQQFGTPTDIYDEPVNRFVADFIGESNIVEGRMVRDYVVNIYGQDFECVDMGIPENKKVEVVIRPEDISLIKAEEGLFKATVDSMLFRGVHYEICCIDNKGYEWVIQTTKKAEVGSEVGLYFDPEAIHIMVPGETEEEFDKRIESYEEVDNA.

Residues L5–I235 enclose the ABC transporter domain. G37–T44 is an ATP binding site.

This sequence belongs to the ABC transporter superfamily. Spermidine/putrescine importer (TC 3.A.1.11.1) family. The complex is composed of two ATP-binding proteins (PotA), two transmembrane proteins (PotB and PotC) and a solute-binding protein (PotD).

Its subcellular location is the cell membrane. The catalysed reaction is ATP + H2O + polyamine-[polyamine-binding protein]Side 1 = ADP + phosphate + polyamineSide 2 + [polyamine-binding protein]Side 1.. Its function is as follows. Part of the ABC transporter complex PotABCD involved in spermidine/putrescine import. Responsible for energy coupling to the transport system. This Staphylococcus aureus (strain USA300) protein is Spermidine/putrescine import ATP-binding protein PotA.